The primary structure comprises 1939 residues: Myosin-4 (1939 aa).

Positions 33-82 constitute a Myosin N-terminal SH3-like domain; the sequence is DAKSSVFVVDAKESYVKATVQSREGGKVTAKTEGGATVTVKEDQVFSMNP. Position 36 is a phosphoserine (Ser-36). A phosphothreonine mark is found at Thr-64 and Thr-69. Ser-79 is modified (phosphoserine). Residues 86-782 enclose the Myosin motor domain; the sequence is DKIEDMAMMT…LLGTLEEMRD (697 aa). Residue Lys-130 is modified to N6,N6,N6-trimethyllysine. Residue 179-186 coordinates ATP; sequence GESGAGKT. The residue at position 389 (Tyr-389) is a Phosphotyrosine. Phosphothreonine is present on Thr-391. Ser-392 bears the Phosphoserine mark. Phosphothreonine is present on Thr-419. Residue Tyr-424 is modified to Phosphotyrosine. Ser-625 carries the post-translational modification Phosphoserine. An actin-binding region spans residues 659–681; that stretch reads LNKLMTNLKSTHPHFVRCLIPNE. His-757 carries the post-translational modification Pros-methylhistidine. The tract at residues 761–775 is actin-binding; that stretch reads KFGHTKVFFKAGLLG. Thr-776 is modified (phosphothreonine). The IQ domain occupies 785 to 814; sequence LAQLITRTQAVCRGYLMRVEFRKMMERRES. Residues 843-1939 are a coiled coil; that stretch reads LLKSAETEKE…EVHTKVISEE (1097 aa). Phosphoserine occurs at positions 1092 and 1096. Disordered regions lie at residues 1128–1147 and 1153–1172; these read AERA…SREL and RLEE…KKRE. Phosphoserine is present on residues Ser-1162 and Ser-1237. Thr-1241 is subject to Phosphothreonine. Residue Ser-1243 is modified to Phosphoserine. Thr-1255 bears the Phosphothreonine mark. Ser-1261 carries the post-translational modification Phosphoserine. At Thr-1265 the chain carries Phosphothreonine. Ser-1278 is subject to Phosphoserine. Thr-1286 carries the phosphothreonine modification. Phosphoserine is present on residues Ser-1288, Ser-1292, Ser-1303, Ser-1306, and Ser-1413. Tyr-1464 is subject to Phosphotyrosine. Thr-1467 carries the phosphothreonine modification. Residue Ser-1474 is modified to Phosphoserine. A Phosphotyrosine modification is found at Tyr-1492. Position 1495 is a phosphoserine (Ser-1495). Thr-1501 is modified (phosphothreonine). Ser-1514 is modified (phosphoserine). Phosphothreonine is present on Thr-1517. A phosphoserine mark is found at Ser-1542, Ser-1547, Ser-1554, Ser-1574, Ser-1600, Ser-1603, Ser-1714, and Ser-1726. Phosphothreonine is present on residues Thr-1730 and Thr-1736. Residue Ser-1739 is modified to Phosphoserine.

Belongs to the TRAFAC class myosin-kinesin ATPase superfamily. Myosin family. As to quaternary structure, muscle myosin is a hexameric protein that consists of 2 heavy chain subunits (MHC), 2 alkali light chain subunits (MLC) and 2 regulatory light chain subunits (MLC-2).

It localises to the cytoplasm. The protein localises to the myofibril. In terms of biological role, muscle contraction. The chain is Myosin-4 from Rattus norvegicus (Rat).